A 345-amino-acid chain; its full sequence is Leucine zipper protein 2 (345 aa).

The signal sequence occupies residues 1-19 (MKFNAAHYLLPLLPALVLS). Residues 16-211 (LVLSTRQDYE…QMKAMKETVQ (196 aa)) are a coiled coil. N-linked (GlcNAc...) asparagine glycosylation occurs at Asn-133. The interval 164-192 (LRYGKKDLLFKAQQLTELEQKLAVAKNEL) is leucine-zipper. Positions 223–345 (PPLSLMPSNP…GTPAREEKLL (123 aa)) are disordered. Residues 261–277 (GHHDSSQVQATKEESRR) show a composition bias toward basic and acidic residues. The segment covering 298 to 313 (PQSNSTAESELTTQKL) has biased composition (polar residues). N-linked (GlcNAc...) asparagine glycosylation is present at Asn-301.

In terms of tissue distribution, expression found only in the brain and spinal cord.

Its subcellular location is the secreted. The chain is Leucine zipper protein 2 (Luzp2) from Mus musculus (Mouse).